The following is a 117-amino-acid chain: Heat shock 70 kDa protein 1-like (117 aa).

Residues 72 to 75 and 84 to 87 contribute to the ATP site; these read ERAK and GSTR.

The protein belongs to the heat shock protein 70 family. As to quaternary structure, interacts with PRKN. Detected at higher levels in caput epididymal spermatazoa than in cauda epididymal spermatazoa (at protein level).

Molecular chaperone implicated in a wide variety of cellular processes, including protection of the proteome from stress, folding and transport of newly synthesized polypeptides, activation of proteolysis of misfolded proteins and the formation and dissociation of protein complexes. Plays a pivotal role in the protein quality control system, ensuring the correct folding of proteins, the re-folding of misfolded proteins and controlling the targeting of proteins for subsequent degradation. This is achieved through cycles of ATP binding, ATP hydrolysis and ADP release, mediated by co-chaperones. The affinity for polypeptides is regulated by its nucleotide bound state. In the ATP-bound form, it has a low affinity for substrate proteins. However, upon hydrolysis of the ATP to ADP, it undergoes a conformational change that increases its affinity for substrate proteins. It goes through repeated cycles of ATP hydrolysis and nucleotide exchange, which permits cycles of substrate binding and release. Positive regulator of PRKN translocation to damaged mitochondria. The protein is Heat shock 70 kDa protein 1-like of Mesocricetus auratus (Golden hamster).